The following is a 578-amino-acid chain: MKDTIRQLIQQALTQLVTEGVLPEGLTPAIQVENARDKTHGDFASNIAMMLAKPAGMKPRDLAEKIIAALPTSADISKAEIAGPGFLNFFQNTDALANRLDAALADDHLGVHKAGPVEKVVIDMSAPNLAKEMHVGHLRSTIIGDSVARVLEFLGDDVIRQNHVGDWGTQFGMLLAYLEENPITSDELSDLENFYRAAKKRFDESEEFATRARGLVVKLQAGDPDCLALWTRFKDISLSHCQKTYELLNVKLTMADVMGESAYNDDLANVVADLKSKGLLVESQGAQCVFLEEFKNTEGEPLPVIVQKADGGYLYATTDLAAVRYRSNTLQADRALYFVDQRQALHFNQVFEVARRAGFVGHPMKMEHMGFGTMNGADGRPFKTRDGGTVKLIDLLTEAKERAYALVKEKNPSLAEDELRKIGEVVGIGAVKYADLSKHRTSDYSFNFELMLNFEGNTAPYLLYAYTRVAGVFRKLGKGFDEVDGNIVLQAAHEQDLAARLAQFGEILNNVADKGTPHVLCSYLYDLAGLFSSFYENCPILAAETAEQQQSRLRLAALTGRTLKQGLELLGLETLERM.

Residues 127–137 (PNLAKEMHVGH) carry the 'HIGH' region motif.

The protein belongs to the class-I aminoacyl-tRNA synthetase family. Monomer.

It localises to the cytoplasm. The enzyme catalyses tRNA(Arg) + L-arginine + ATP = L-arginyl-tRNA(Arg) + AMP + diphosphate. The sequence is that of Arginine--tRNA ligase from Pseudomonas entomophila (strain L48).